The sequence spans 382 residues: uncharacterized protein (382 aa).

The next 12 membrane-spanning stretches (helical) occupy residues 14-34 (GLLLLTLAIAVLNTLVPLWLA), 45-65 (VVSSSYFTGNLVGTLLTGYVI), 79-99 (FIFAAGCAGLGLMIGFWSWLA), 102-122 (FVAGIGCAMIWVVVESALMCS), 131-151 (LLAAYMMVYYVGTFLGQLLVS), 157-177 (LMSVLPWVTGLTLAGILPLLF), 204-224 (LGVNGCIISGIVLGSLYGLMP), 235-255 (ASIGFWMAVLVSAGILGQWPI), 270-290 (VQVFVVILGSIAMLSQAAMAP), 291-311 (ALFILGAAGFTLYPVAMAWAC), 325-345 (ALLLSYTVGSLLGPSFTAMLM), and 348-368 (FSDNLLFIMIASVSFIYLLML).

This sequence belongs to the major facilitator superfamily. YcaD (TC 2.A.1.26) family.

It is found in the cell inner membrane. This is an uncharacterized protein from Escherichia coli O45:K1 (strain S88 / ExPEC).